We begin with the raw amino-acid sequence, 447 residues long: Rab GDP dissociation inhibitor alpha (447 aa).

The residue at position 427 (S427) is a Phosphoserine.

Belongs to the Rab GDI family. As to quaternary structure, interacts with RHOH. Interacts with the non-phosphorylated forms of RAB1A, RAB3A, RAB5A, RAB5B, RAB5C, RAB8A, RAB8B, RAB10, RAB12, RAB35, and RAB43. Interacts with RAB3A.

It is found in the cytoplasm. The protein resides in the golgi apparatus. The protein localises to the trans-Golgi network. Regulates the GDP/GTP exchange reaction of most Rab proteins by inhibiting the dissociation of GDP from them, and the subsequent binding of GTP to them. Promotes the dissociation of GDP-bound Rab proteins from the membrane and inhibits their activation. Promotes the dissociation of RAB1A, RAB3A, RAB5A and RAB10 from membranes. This Bos taurus (Bovine) protein is Rab GDP dissociation inhibitor alpha (GDI1).